A 91-amino-acid polypeptide reads, in one-letter code: Acylphosphatase (91 aa).

The 88-residue stretch at 4-91 (RYLIKVLGRV…DNEKSFKIVY (88 aa)) folds into the Acylphosphatase-like domain. Active-site residues include Arg19 and Asn37.

The protein belongs to the acylphosphatase family.

The catalysed reaction is an acyl phosphate + H2O = a carboxylate + phosphate + H(+). This chain is Acylphosphatase (acyP), found in Clostridium acetobutylicum (strain ATCC 824 / DSM 792 / JCM 1419 / IAM 19013 / LMG 5710 / NBRC 13948 / NRRL B-527 / VKM B-1787 / 2291 / W).